Reading from the N-terminus, the 1783-residue chain is Trans-splicing factor Raa3, chloroplastic (1783 aa).

A chloroplast-targeting transit peptide spans 1 to 40; that stretch reads MKADLATAKGSSPAFSAPRTYRARLLSRCLNKCFNTVLVS. Disordered regions lie at residues 97 to 378, 420 to 484, 563 to 610, 652 to 709, 918 to 971, 1395 to 1427, 1476 to 1506, and 1620 to 1639; these read ATTH…VGVN, ATSA…VAAQ, ARVG…SATK, STEP…SPAA, AAPT…QRAS, RDAK…QQHQ, PAPA…RRSR, and VKGR…DVQG. Positions 105 to 118 are enriched in gly residues; the sequence is DSGGQGPAAAGGRG. 3 stretches are compositionally biased toward low complexity: residues 126–157, 186–205, and 224–242; these read QAAA…PQRP, AVDA…PAPA, and AGKP…VGPQ. Positions 256 to 273 are enriched in basic and acidic residues; it reads DESHMGLTHRDQGHDERI. Low complexity predominate over residues 277 to 289; that stretch reads AGEAWKAGAVAAP. Residues 307 to 316 show a composition bias toward polar residues; that stretch reads LASSALGTHS. Low complexity-rich tracts occupy residues 343–374, 420–436, 577–599, 655–669, 676–709, 928–970, and 1403–1417; these read SGSS…ITSN, ATSA…SSSS, RPVQ…SQPG, PLAA…ASAS, SSSN…SPAA, SAAA…PQRA, and QSAA…AAQD. Basic residues-rich tracts occupy residues 1494 to 1506 and 1620 to 1630; these read KSRR…RRSR and VKGRGRGRRTA. Residues 1713 to 1772 form the RAP domain; it reads LAVGAAAGGAVIRNSRWLLSGAGALRRRLLTHAGWLVVPVRERQWKDLRSAEQQRRVVRE.

In terms of assembly, part of a 1700 kDa complex that includes the precursor RNA to exon 1 and the tscA RNA.

It localises to the plastid. The protein localises to the chloroplast stroma. Functionally, required for trans-splicing of exons 1 and 2 of the chloroplast encoded psaA mRNA (a group II intron). May be required for stability of the chloroplast RNA-protein complex in which it is found. The sequence is that of Trans-splicing factor Raa3, chloroplastic (RAA3) from Chlamydomonas reinhardtii (Chlamydomonas smithii).